Here is a 161-residue protein sequence, read N- to C-terminus: Large ribosomal subunit protein bL17 (161 aa).

Residues 126–161 form a disordered region; that stretch reads KVAKKATRTRRSKKTTEAAPAAEVPATEEPKAESAE. Residues 129–138 show a composition bias toward basic residues; sequence KKATRTRRSK. Over residues 142–152 the composition is skewed to low complexity; it reads EAAPAAEVPAT.

This sequence belongs to the bacterial ribosomal protein bL17 family. As to quaternary structure, part of the 50S ribosomal subunit. Contacts protein L32.

In Bacteroides fragilis (strain ATCC 25285 / DSM 2151 / CCUG 4856 / JCM 11019 / LMG 10263 / NCTC 9343 / Onslow / VPI 2553 / EN-2), this protein is Large ribosomal subunit protein bL17.